Consider the following 376-residue polypeptide: UDP-4-amino-4,6-dideoxy-N-acetyl-beta-L-altrosamine transaminase (376 aa).

Residues Tyr4, 24 to 27 (EILT), Ala54, and Ser176 contribute to the substrate site. Position 181 is an N6-(pyridoxal phosphate)lysine (Lys181). Substrate is bound by residues Asn226 and 311–314 (QVHY).

It belongs to the DegT/DnrJ/EryC1 family.

It catalyses the reaction UDP-4-amino-4,6-dideoxy-N-acetyl-beta-L-altrosamine + 2-oxoglutarate = UDP-2-acetamido-2,6-dideoxy-beta-L-arabino-hex-4-ulose + L-glutamate. Functionally, catalyzes the second step in the biosynthesis of pseudaminic acid, a sialic-acid-like sugar that is used to modify flagellin. Uses UDP-2-acetamido-2,6-dideoxy-beta-L-arabino-4-hexulose as substrate producing UDP-4-amino-4,6-dideoxy-beta-L-AltNAc. The protein is UDP-4-amino-4,6-dideoxy-N-acetyl-beta-L-altrosamine transaminase (pseC) of Campylobacter jejuni subsp. jejuni serotype O:2 (strain ATCC 700819 / NCTC 11168).